The primary structure comprises 432 residues: Glutamyl-tRNA reductase (432 aa).

Substrate contacts are provided by residues 49–52, S101, 106–108, and Q112; these read TCNR and ESQ. Catalysis depends on C50, which acts as the Nucleophile. 181–186 lines the NADP(+) pocket; sequence GTGETI. Residues 410 to 432 form a disordered region; sequence KPGYHHPTLQTTIVKTDETDPAS.

Belongs to the glutamyl-tRNA reductase family. Homodimer.

The enzyme catalyses (S)-4-amino-5-oxopentanoate + tRNA(Glu) + NADP(+) = L-glutamyl-tRNA(Glu) + NADPH + H(+). Its pathway is porphyrin-containing compound metabolism; protoporphyrin-IX biosynthesis; 5-aminolevulinate from L-glutamyl-tRNA(Glu): step 1/2. Functionally, catalyzes the NADPH-dependent reduction of glutamyl-tRNA(Glu) to glutamate 1-semialdehyde (GSA). This Xylella fastidiosa (strain 9a5c) protein is Glutamyl-tRNA reductase.